A 486-amino-acid chain; its full sequence is Retrograde regulation protein 3 (486 aa).

Residues 27–35 carry the 9aaTAD 1 motif; sequence ETLDFSLVT. Composition is skewed to polar residues over residues 75 to 94 and 101 to 130; these read NNNL…TAST and SQSS…IGQG. Residues 75 to 130 are disordered; it reads NNNLMGSQARSNSQTPTASTIYEEAESQSSYLDDMFRTSQGGRPVTQNSISSIGQG. Phosphoserine occurs at positions 81, 123, and 142. Thr150 is subject to Phosphothreonine. The 9aaTAD 2 motif lies at 189–197; the sequence is SSINSDMMT. Residues Ser227, Ser236, and Ser241 each carry the phosphoserine modification. The interval 243–274 is disordered; that stretch reads RHGSINTPRTRHTSISSNMTENIGPGSVPKIL. Over residues 246–263 the composition is skewed to polar residues; that stretch reads SINTPRTRHTSISSNMTE. Ser269 carries the phosphoserine modification. The region spanning 285–344 is the bHLH domain; it reads RKREFHNAVERRRRELIKQKIKELGQLVPPSLLNYDDLGKQIKPNKGIILDRTVEYLQYL. Residues 374-395 are disordered; that stretch reads ALSPFTNNHHASSGQNNSENSE.

As to quaternary structure, binds DNA as a heterodimer with RTG1.

The protein resides in the nucleus. Its function is as follows. Transcription factor that regulates CIT2 gene expression. Binds to two identical sites oriented as inverted repeats 28 bp apart in a regulatory upstream activation sequence element (UASR) in the CIT2 promoter. The core binding site is 5'-GGTCAC-3'. The polypeptide is Retrograde regulation protein 3 (RTG3) (Saccharomyces cerevisiae (strain ATCC 204508 / S288c) (Baker's yeast)).